A 129-amino-acid chain; its full sequence is Small ribosomal subunit protein uS9 (129 aa).

Belongs to the universal ribosomal protein uS9 family.

The protein is Small ribosomal subunit protein uS9 of Helicobacter acinonychis (strain Sheeba).